The chain runs to 1415 residues: DNA-directed RNA polymerase subunit beta' (1415 aa).

Zn(2+)-binding residues include Cys-72, Cys-74, Cys-87, and Cys-90. 3 residues coordinate Mg(2+): Asp-463, Asp-465, and Asp-467. Positions 812, 886, 893, and 896 each coordinate Zn(2+).

The protein belongs to the RNA polymerase beta' chain family. The RNAP catalytic core consists of 2 alpha, 1 beta, 1 beta' and 1 omega subunit. When a sigma factor is associated with the core the holoenzyme is formed, which can initiate transcription. It depends on Mg(2+) as a cofactor. The cofactor is Zn(2+).

It carries out the reaction RNA(n) + a ribonucleoside 5'-triphosphate = RNA(n+1) + diphosphate. Functionally, DNA-dependent RNA polymerase catalyzes the transcription of DNA into RNA using the four ribonucleoside triphosphates as substrates. This chain is DNA-directed RNA polymerase subunit beta', found in Dinoroseobacter shibae (strain DSM 16493 / NCIMB 14021 / DFL 12).